A 314-amino-acid polypeptide reads, in one-letter code: Mitochondrial 2-oxoglutarate/malate carrier protein (314 aa).

Residue alanine 2 is modified to N-acetylalanine. Serine 6 is modified (phosphoserine). 3 Solcar repeats span residues 23-108 (VKFL…LFER), 117-208 (PGFL…SKQF), and 217-306 (DNIL…MNKA). The chain crosses the membrane as a helical span at residues 24–42 (KFLFGGLAGMGATVFVQPL). Lysine 57 carries the N6-succinyllysine modification. Lysine 73 carries the post-translational modification N6-acetyllysine. The chain crosses the membrane as a helical span at residues 83–101 (GLSAGLLRQATYTTTRLGI). Tyrosine 102 is modified (phosphotyrosine). The next 3 membrane-spanning stretches (helical) occupy residues 119–140 (FLLK…GPPA), 183–202 (GCIP…LASY), and 222–240 (HFCA…SMPV). The residue at position 256 (lysine 256) is an N6-acetyllysine. The chain crosses the membrane as a helical span at residues 281–300 (GFTPYYARLGPHTVLTFIFL).

The protein belongs to the mitochondrial carrier (TC 2.A.29) family. Interacts with SMIM26. As to expression, expressed in liver, heart and brain.

It localises to the mitochondrion inner membrane. It catalyses the reaction (S)-malate(in) + 2-oxoglutarate(out) = (S)-malate(out) + 2-oxoglutarate(in). The catalysed reaction is malonate(in) + 2-oxoglutarate(out) = malonate(out) + 2-oxoglutarate(in). It carries out the reaction succinate(in) + 2-oxoglutarate(out) = succinate(out) + 2-oxoglutarate(in). The enzyme catalyses maleate(in) + 2-oxoglutarate(out) = maleate(out) + 2-oxoglutarate(in). It catalyses the reaction oxaloacetate(in) + 2-oxoglutarate(out) = oxaloacetate(out) + 2-oxoglutarate(in). Its function is as follows. Catalyzes the transport of 2-oxoglutarate (alpha-oxoglutarate) across the inner mitochondrial membrane in an electroneutral exchange for malate. Can also exchange 2-oxoglutarate for other dicarboxylic acids such as malonate, succinate, maleate and oxaloacetate, although with lower affinity. Contributes to several metabolic processes, including the malate-aspartate shuttle, the oxoglutarate/isocitrate shuttle, in gluconeogenesis from lactate, and in nitrogen metabolism. Maintains mitochondrial fusion and fission events, and the organization and morphology of cristae. Involved in the regulation of apoptosis. Helps protect from cytotoxic-induced apoptosis by modulating glutathione levels in mitochondria. The polypeptide is Mitochondrial 2-oxoglutarate/malate carrier protein (Slc25a11) (Rattus norvegicus (Rat)).